Here is an 894-residue protein sequence, read N- to C-terminus: MKSIQTPSKSHTNTKETPVMSQEETKGYNPREIEESYYKIWETRGYFEVEGNAQIQKPNQNFAVMLPPPNVTGSLHIGHALNHTLIDIMTRYKRMDGYKTLWQPGTDHAGIATQNVVEKRLLSKGIKKEELGREAFLEKVWEWREESGGTILSQMRKLGTSPAWSRTRFTMDEGLKNSVARAFVKLYEEGYIIRGNYMVNWCTHDGALSDIEVEYDANKGKLYHLRYFFKDSSDYIVVATTRPETFFGDTAVMVHPEDERYAHLIGQTLVLPLIGREIQIIADSYVDREFGTGMVKVTPAHDPNDYEVGKRHDLEFITVFDKEGYLNHHAGEFEGLERLEAREAIVAKLQEKGYIEKIEEHENQVGKCYRCGNVVEPYISKQWFVKKEVAQKAIERINSGEAAFYPAQWKNNYNAWMKELRDWCISRQLWWGHQIPVYYCDCGHEWASETTPSHCPKCQGSQFHQDPDVLDTWFSSALWPFSTLGWGNGEAGKGSWWREEDLQEFYPNSLLITGFDILFFWVARMLMMGEHFLDNLPFKDIYLHALVRDEKGQKMSKSKGNVIDPLELIEKYGCDSTRFTLAILCAQGRDVRLSSQQLEISKNFTNKLYNAANFLLLNASSFKTLDEITPQTPLGRYMASRFSLCVEELRGALDGYRFNDGATVLYRFLWGEFCDWGIELSKANKEAINELGAIFREAMKLLHPYMPFISEHLYQKLGGARLEESTSIMILPYPKANWREEKIEMTFEVIMDAIISTRRLKATLELANQKIPVVFIKAPQGMDESLINTFIPRLAKVDSIELLSEKPAACVVDVGEKCEIYLSTAQLDLSPIISRLEKQQEKLQKEVDKLLGMLNNEKFVANAPQNVLEQNRVALKEAQTKLDKVKVELQGIKG.

Positions methionine 1–glutamine 22 are enriched in polar residues. Residues methionine 1 to tyrosine 28 form a disordered region. Residues proline 69–histidine 79 carry the 'HIGH' region motif. Residues lysine 554 to serine 558 carry the 'KMSKS' region motif. ATP is bound at residue lysine 557. Positions isoleucine 832–glycine 894 form a coiled coil.

The protein belongs to the class-I aminoacyl-tRNA synthetase family. ValS type 1 subfamily. Monomer.

It is found in the cytoplasm. The enzyme catalyses tRNA(Val) + L-valine + ATP = L-valyl-tRNA(Val) + AMP + diphosphate. In terms of biological role, catalyzes the attachment of valine to tRNA(Val). As ValRS can inadvertently accommodate and process structurally similar amino acids such as threonine, to avoid such errors, it has a 'posttransfer' editing activity that hydrolyzes mischarged Thr-tRNA(Val) in a tRNA-dependent manner. The sequence is that of Valine--tRNA ligase from Wolinella succinogenes (strain ATCC 29543 / DSM 1740 / CCUG 13145 / JCM 31913 / LMG 7466 / NCTC 11488 / FDC 602W) (Vibrio succinogenes).